The primary structure comprises 428 residues: Enolase (428 aa).

Glutamine 162 lines the (2R)-2-phosphoglycerate pocket. Glutamate 204 acts as the Proton donor in catalysis. 3 residues coordinate Mg(2+): aspartate 241, glutamate 288, and aspartate 315. (2R)-2-phosphoglycerate contacts are provided by lysine 340, arginine 369, serine 370, and lysine 391. Lysine 340 (proton acceptor) is an active-site residue.

This sequence belongs to the enolase family. It depends on Mg(2+) as a cofactor.

It localises to the cytoplasm. The protein resides in the secreted. The protein localises to the cell surface. It catalyses the reaction (2R)-2-phosphoglycerate = phosphoenolpyruvate + H2O. The protein operates within carbohydrate degradation; glycolysis; pyruvate from D-glyceraldehyde 3-phosphate: step 4/5. Its function is as follows. Catalyzes the reversible conversion of 2-phosphoglycerate (2-PG) into phosphoenolpyruvate (PEP). It is essential for the degradation of carbohydrates via glycolysis. This is Enolase from Azobacteroides pseudotrichonymphae genomovar. CFP2.